The primary structure comprises 914 residues: Ubiquitin carboxyl-terminal hydrolase 20 (914 aa).

The segment at 6-111 (DLCPHLDSIG…GSSSKFSEQD (106 aa)) adopts a UBP-type zinc-finger fold. Positions 8, 10, 30, 33, 43, 48, 53, 60, 64, 70, 83, and 86 each coordinate Zn(2+). Phosphoserine is present on residues Ser112, Ser132, and Ser134. Positions 145-685 (TGMKNLGNSC…EGYVLFYRKS (541 aa)) constitute a USP domain. Cys154 (nucleophile) is an active-site residue. Disordered regions lie at residues 257-347 (LTEA…VDED) and 360-415 (QPAE…ASPV). Thr258 is modified (phosphothreonine). Residues 259–279 (EARDSDSSDTDEKREGDRSPS) show a composition bias toward basic and acidic residues. Residue Ser305 is modified to Phosphoserine. The segment covering 316-332 (EAGRAISEKERMKDRKF) has biased composition (basic and acidic residues). The residue at position 368 (Ser368) is a Phosphoserine. Thr377 bears the Phosphothreonine mark. 2 positions are modified to phosphoserine: Ser408 and Ser413. His643 (proton acceptor) is an active-site residue. 2 DUSP domains span residues 687–780 (EEAM…LYVC) and 789–892 (ALAK…RQSV).

This sequence belongs to the peptidase C19 family. USP20/USP33 subfamily. As to quaternary structure, interacts with VHL, leading to its ubiquitination and subsequent degradation. Interacts with CCP110. Interacts with DIO2. Interacts with HIF1A. Interacts with ADRB2. Interacts with USP18. In terms of processing, ubiquitinated via a VHL-dependent pathway for proteasomal degradation.

The protein localises to the cytoplasm. The protein resides in the endoplasmic reticulum. It localises to the perinuclear region. It is found in the cytoskeleton. Its subcellular location is the microtubule organizing center. The protein localises to the centrosome. The catalysed reaction is Thiol-dependent hydrolysis of ester, thioester, amide, peptide and isopeptide bonds formed by the C-terminal Gly of ubiquitin (a 76-residue protein attached to proteins as an intracellular targeting signal).. Functionally, deubiquitinating enzyme that plays a role in many cellular processes including autophagy, cellular antiviral response or membrane protein biogenesis. Attenuates TLR4-mediated NF-kappa-B signaling by cooperating with beta-arrestin-2/ARRB2 and inhibiting TRAF6 autoubiquitination. Promotes cellular antiviral responses by deconjugating 'Lys-33' and 'Lys-48'-linked ubiquitination of STING1 leading to its stabilization. Plays an essential role in autophagy induction by regulating the ULK1 stability through deubiquitination of ULK1. Acts as a positive regulator for NF-kappa-B activation by TNF-alpha through deubiquitinating 'Lys-48'-linked polyubiquitination of SQSTM1, leading to its increased stability. Acts as a regulator of G-protein coupled receptor (GPCR) signaling by mediating the deubiquitination beta-2 adrenergic receptor (ADRB2). Plays a central role in ADRB2 recycling and resensitization after prolonged agonist stimulation by constitutively binding ADRB2, mediating deubiquitination of ADRB2 and inhibiting lysosomal trafficking of ADRB2. Upon dissociation, it is probably transferred to the translocated beta-arrestins, possibly leading to beta-arrestins deubiquitination and disengagement from ADRB2. This suggests the existence of a dynamic exchange between the ADRB2 and beta-arrestins. Deubiquitinates DIO2, thereby regulating thyroid hormone regulation. Deubiquitinates HIF1A, leading to stabilize HIF1A and enhance HIF1A-mediated activity. Deubiquitinates MCL1, a pivotal member of the anti-apoptotic Bcl-2 protein family to regulate its stability. Within the endoplasmic reticulum, participates with USP33 in the rescue of post-translationally targeted membrane proteins that are inappropriately ubiquitinated by the cytosolic protein quality control in the cytosol. The sequence is that of Ubiquitin carboxyl-terminal hydrolase 20 (USP20) from Homo sapiens (Human).